The sequence spans 383 residues: 8-amino-7-oxononanoate synthase (383 aa).

R21 serves as a coordination point for substrate. Position 108-109 (108-109) interacts with pyridoxal 5'-phosphate; it reads GY. H133 is a binding site for substrate. Pyridoxal 5'-phosphate contacts are provided by S179, H207, and T233. K236 is modified (N6-(pyridoxal phosphate)lysine). T350 contacts substrate.

The protein belongs to the class-II pyridoxal-phosphate-dependent aminotransferase family. BioF subfamily. As to quaternary structure, homodimer. Pyridoxal 5'-phosphate serves as cofactor.

It catalyses the reaction 6-carboxyhexanoyl-[ACP] + L-alanine + H(+) = (8S)-8-amino-7-oxononanoate + holo-[ACP] + CO2. Its pathway is cofactor biosynthesis; biotin biosynthesis. Its function is as follows. Catalyzes the decarboxylative condensation of pimeloyl-[acyl-carrier protein] and L-alanine to produce 8-amino-7-oxononanoate (AON), [acyl-carrier protein], and carbon dioxide. The polypeptide is 8-amino-7-oxononanoate synthase (Yersinia pseudotuberculosis serotype O:1b (strain IP 31758)).